We begin with the raw amino-acid sequence, 73 residues long: Translation initiation factor IF-1 (73 aa).

The S1-like domain occupies 1 to 73 (MAKKEDTIVL…TKARVVYRHR (73 aa)).

It belongs to the IF-1 family. As to quaternary structure, component of the 30S ribosomal translation pre-initiation complex which assembles on the 30S ribosome in the order IF-2 and IF-3, IF-1 and N-formylmethionyl-tRNA(fMet); mRNA recruitment can occur at any time during PIC assembly.

It is found in the cytoplasm. One of the essential components for the initiation of protein synthesis. Stabilizes the binding of IF-2 and IF-3 on the 30S subunit to which N-formylmethionyl-tRNA(fMet) subsequently binds. Helps modulate mRNA selection, yielding the 30S pre-initiation complex (PIC). Upon addition of the 50S ribosomal subunit IF-1, IF-2 and IF-3 are released leaving the mature 70S translation initiation complex. In Chlamydia muridarum (strain MoPn / Nigg), this protein is Translation initiation factor IF-1.